A 1019-amino-acid chain; its full sequence is UPF0182 protein Tery_0938 (1019 aa).

9 consecutive transmembrane segments (helical) span residues 23–43, 67–87, 128–148, 192–212, 213–233, 270–290, 313–333, 355–375, and 416–436; these read IHIL…GFST, TETW…LVNL, LSLS…GLIL, LWLL…PILW, LSVF…SHWA, FWLI…YLLS, LGGG…FELL, YVFL…QAIF, and AILT…PKIV.

This sequence belongs to the UPF0182 family.

It is found in the cell membrane. This is UPF0182 protein Tery_0938 from Trichodesmium erythraeum (strain IMS101).